Reading from the N-terminus, the 62-residue chain is Keratin-associated protein 8-1 (62 aa).

Residues G12–C53 form a 12 X 2 AA repeats of G-[YCGS] region.

Belongs to the KRTAP type 8 family. In terms of assembly, interacts with wool keratins. As to expression, wool.

Its function is as follows. In the wool cortex, wool keratin intermediate filaments are embedded in an interfilamentous matrix, consisting of hair keratin-associated proteins (KRTAP), which are essential for the formation of a rigid and resistant wool shaft through their extensive disulfide bond cross-linking with abundant cysteine residues of wool keratins. The matrix proteins include the high-sulfur and high-glycine-tyrosine keratins. The protein is Keratin-associated protein 8-1 (KRTAP8-1) of Ovis aries (Sheep).